The following is a 163-amino-acid chain: Ribonuclease H (163 aa).

Residues Ser-4–Gln-146 enclose the RNase H type-1 domain. Residues Asp-13, Glu-51, Asp-73, and Asp-138 each coordinate Mg(2+).

The protein belongs to the RNase H family. In terms of assembly, monomer. The cofactor is Mg(2+).

The protein localises to the cytoplasm. It carries out the reaction Endonucleolytic cleavage to 5'-phosphomonoester.. Its function is as follows. Endonuclease that specifically degrades the RNA of RNA-DNA hybrids. The sequence is that of Ribonuclease H from Rippkaea orientalis (strain PCC 8801 / RF-1) (Cyanothece sp. (strain PCC 8801)).